Here is an 848-residue protein sequence, read N- to C-terminus: DNA-binding protein RFX6 (848 aa).

A DNA-binding region (RFX-type winged-helix) is located at residues 56–131; sequence TLQWLEDNYI…YHYYGIGIKE (76 aa).

This sequence belongs to the RFX family. As to expression, expressed in progenitors and hormone expressing cells of the islet lineage.

The protein resides in the nucleus. Transcription factor required to direct islet cell differentiation during endocrine pancreas development. In Danio rerio (Zebrafish), this protein is DNA-binding protein RFX6 (rfx6).